The chain runs to 344 residues: Nuclear distribution protein nudE homolog 1 (344 aa).

The interval Met1–Ile93 is self-association. Positions Trp18–Lys188 form a coiled coil. Residues Glu88–Leu156 form an interaction with PAFAH1B1 region. An interaction with CENPF region spans residues Gln167–Ala290. A disordered region spans residues Ala181–Thr246. The residue at position 211 (Ser211) is a Phosphoserine. 2 positions are modified to phosphothreonine: Thr215 and Thr228. Ser239 is subject to Phosphoserine. Residues Thr243 and Thr246 each carry the phosphothreonine modification. Cys274 is lipidated: S-palmitoyl cysteine; by ZDHHC2, ZDHHC3 and ZDHHC7. Over residues Tyr279–Pro289 the composition is skewed to polar residues. The tract at residues Tyr279–Gln337 is disordered. The residue at position 282 (Ser282) is a Phosphoserine. Residues Lys296 to Pro305 are compositionally biased toward basic and acidic residues. Ser309 is subject to Phosphoserine. Low complexity predominate over residues Pro324–Ala336.

The protein belongs to the nudE family. Homodimer. Interacts with dynactin and PCM1. Interacts with CENPF, LIS1, CNTRL, dynein, tubulin gamma, PAFAH1B1, PCNT, SLMAP and TCP1. Interacts with ZNF365. Interacts with RAB9A; the interaction leads to RAB9A-dynein motor tethering. Interacts (via C-terminus) with MCRS1 (via C-terminus); phosphorylation of NDE1 inhibits the interaction. Phosphorylated in mitosis. Phosphorylation at Thr-246 is essential for the G2/M transition. Highly expressed in ovary. Also expressed in brain, heart, kidney, large intestine, liver, lung, small intestine and testis.

The protein resides in the cytoplasm. It localises to the cytoskeleton. Its subcellular location is the microtubule organizing center. The protein localises to the centrosome. It is found in the spindle. The protein resides in the chromosome. It localises to the centromere. Its subcellular location is the kinetochore. The protein localises to the cleavage furrow. It is found in the cytoplasmic vesicle membrane. Required for centrosome duplication and formation and function of the mitotic spindle. Essential for the development of the cerebral cortex. May regulate the production of neurons by controlling the orientation of the mitotic spindle during division of cortical neuronal progenitors of the proliferative ventricular zone of the brain. Orientation of the division plane perpendicular to the layers of the cortex gives rise to two proliferative neuronal progenitors whereas parallel orientation of the division plane yields one proliferative neuronal progenitor and a postmitotic neuron. A premature shift towards a neuronal fate within the progenitor population may result in an overall reduction in the final number of neurons and an increase in the number of neurons in the deeper layers of the cortex. Acts as a RAB9A/B effector that tethers RAB9-associated late endosomes to the dynein motor for their retrograde transport to the trans-Golgi network. The sequence is that of Nuclear distribution protein nudE homolog 1 from Mus musculus (Mouse).